Reading from the N-terminus, the 461-residue chain is Kynureninase (461 aa).

Pyridoxal 5'-phosphate contacts are provided by residues Leu-114, Thr-115, 142–145 (FPSD), Asp-228, His-231, and Tyr-253. N6-(pyridoxal phosphate)lysine is present on Lys-254. Residues Trp-288 and Asn-316 each contribute to the pyridoxal 5'-phosphate site.

It belongs to the kynureninase family. As to quaternary structure, homodimer. Pyridoxal 5'-phosphate serves as cofactor.

The protein resides in the cytoplasm. The enzyme catalyses L-kynurenine + H2O = anthranilate + L-alanine + H(+). It carries out the reaction 3-hydroxy-L-kynurenine + H2O = 3-hydroxyanthranilate + L-alanine + H(+). The protein operates within amino-acid degradation; L-kynurenine degradation; L-alanine and anthranilate from L-kynurenine: step 1/1. Its pathway is cofactor biosynthesis; NAD(+) biosynthesis; quinolinate from L-kynurenine: step 2/3. In terms of biological role, catalyzes the cleavage of L-kynurenine (L-Kyn) and L-3-hydroxykynurenine (L-3OHKyn) into anthranilic acid (AA) and 3-hydroxyanthranilic acid (3-OHAA), respectively. The protein is Kynureninase of Candida albicans (strain SC5314 / ATCC MYA-2876) (Yeast).